The chain runs to 537 residues: Extracellular exo-inulinase inuE (537 aa).

The first 19 residues, 1–19 (MARLLKAVTVCALAGIAHA), serve as a signal peptide directing secretion. The active site involves aspartate 41. 8 N-linked (GlcNAc...) asparagine glycosylation sites follow: asparagine 49, asparagine 67, asparagine 112, asparagine 300, asparagine 363, asparagine 398, asparagine 430, and asparagine 531.

The protein belongs to the glycosyl hydrolase 32 family.

The protein localises to the secreted. It catalyses the reaction Hydrolysis of terminal, non-reducing (2-&gt;1)- and (2-&gt;6)-linked beta-D-fructofuranose residues in fructans.. In terms of biological role, exo-inulinase involved in utilization of the plant storage polymer inulin, consisting of fructooligosaccharides with a degree of polymerization (DP) value from 2 to 60. Splits off terminal fructose units successively from the non-reducing end of the inulin molecule, and also hydrolyze sucrose and raffinose. The chain is Extracellular exo-inulinase inuE (inuE) from Aspergillus niger (strain ATCC MYA-4892 / CBS 513.88 / FGSC A1513).